Consider the following 323-residue polypeptide: Pectate lyase A (323 aa).

The first 31 residues, 1–31 (MTNFKWIVAAAGLLFGQVLAAPTATSTHAKR), serve as a signal peptide directing secretion. The N-linked (GlcNAc...) asparagine glycan is linked to Asn-95. The Ca(2+) site is built by Asp-136, Asp-165, and Asp-169. The active site involves Arg-222.

It belongs to the polysaccharide lyase 1 family. It depends on Ca(2+) as a cofactor.

The protein localises to the secreted. The enzyme catalyses Eliminative cleavage of (1-&gt;4)-alpha-D-galacturonan to give oligosaccharides with 4-deoxy-alpha-D-galact-4-enuronosyl groups at their non-reducing ends.. Its function is as follows. Pectinolytic enzyme consist of four classes of enzymes: pectin lyase, polygalacturonase, pectin methylesterase and rhamnogalacturonase. Among pectinolytic enzymes, pectin lyase is the most important in depolymerization of pectin, since it cleaves internal glycosidic bonds of highly methylated pectins. Favors pectate, the anion, over pectin, the methyl ester. The chain is Pectate lyase A (plyA) from Aspergillus niger.